The following is a 239-amino-acid chain: tRNA (guanine-N(1)-)-methyltransferase (239 aa).

S-adenosyl-L-methionine is bound by residues Gly-110 and 130–135 (VGDYVL).

This sequence belongs to the RNA methyltransferase TrmD family. In terms of assembly, homodimer.

It localises to the cytoplasm. The catalysed reaction is guanosine(37) in tRNA + S-adenosyl-L-methionine = N(1)-methylguanosine(37) in tRNA + S-adenosyl-L-homocysteine + H(+). Its function is as follows. Specifically methylates guanosine-37 in various tRNAs. The chain is tRNA (guanine-N(1)-)-methyltransferase from Borrelia hermsii (strain HS1 / DAH).